Reading from the N-terminus, the 813-residue chain is Protein translocase subunit SecA 2 (813 aa).

ATP is bound by residues Q105, 123–127 (GEGKT), and D525.

It belongs to the SecA family. As to quaternary structure, monomer and homodimer. Part of the essential Sec protein translocation apparatus which comprises SecA, SecYEG and auxiliary proteins SecDF-YajC and YidC.

It localises to the cell inner membrane. Its subcellular location is the cytoplasm. It catalyses the reaction ATP + H2O + cellular proteinSide 1 = ADP + phosphate + cellular proteinSide 2.. Functionally, part of the Sec protein translocase complex. Interacts with the SecYEG preprotein conducting channel. Has a central role in coupling the hydrolysis of ATP to the transfer of proteins into and across the cell membrane, serving both as a receptor for the preprotein-SecB complex and as an ATP-driven molecular motor driving the stepwise translocation of polypeptide chains across the membrane. The chain is Protein translocase subunit SecA 2 from Rhodopseudomonas palustris (strain BisA53).